We begin with the raw amino-acid sequence, 452 residues long: tRNA modification GTPase MnmE (452 aa).

R22, E79, and K119 together coordinate (6S)-5-formyl-5,6,7,8-tetrahydrofolate. The TrmE-type G domain occupies 215–375; it reads GMKVVIAGRP…LRQHLKQSMG (161 aa). Residue N225 coordinates K(+). Residues 225–230, 244–250, 269–272, and 333–336 each bind GTP; these read NAGKSS, TDIAGTT, DTAG, and NKAD. Residue S229 coordinates Mg(2+). K(+)-binding residues include T244, I246, and T249. Mg(2+) is bound at residue T250. Residue K452 participates in (6S)-5-formyl-5,6,7,8-tetrahydrofolate binding.

This sequence belongs to the TRAFAC class TrmE-Era-EngA-EngB-Septin-like GTPase superfamily. TrmE GTPase family. As to quaternary structure, homodimer. Heterotetramer of two MnmE and two MnmG subunits. K(+) serves as cofactor.

The protein resides in the cytoplasm. Exhibits a very high intrinsic GTPase hydrolysis rate. Involved in the addition of a carboxymethylaminomethyl (cmnm) group at the wobble position (U34) of certain tRNAs, forming tRNA-cmnm(5)s(2)U34. The sequence is that of tRNA modification GTPase MnmE from Histophilus somni (strain 2336) (Haemophilus somnus).